The sequence spans 255 residues: Ribonuclease HII (255 aa).

The region spanning 70 to 255 (ELIAGVDEVG…FEPIKSIIKK (186 aa)) is the RNase H type-2 domain. The a divalent metal cation site is built by D76, E77, and D168.

This sequence belongs to the RNase HII family. Requires Mn(2+) as cofactor. Mg(2+) is required as a cofactor.

It localises to the cytoplasm. The enzyme catalyses Endonucleolytic cleavage to 5'-phosphomonoester.. Functionally, endonuclease that specifically degrades the RNA of RNA-DNA hybrids. This is Ribonuclease HII from Streptococcus thermophilus (strain ATCC BAA-491 / LMD-9).